The following is a 259-amino-acid chain: Ribonuclease HII (259 aa).

The region spanning 70–258 (TLIVGIDEVG…VKSLVLGKKE (189 aa)) is the RNase H type-2 domain. Positions 76, 77, and 168 each coordinate a divalent metal cation.

This sequence belongs to the RNase HII family. Mn(2+) is required as a cofactor. It depends on Mg(2+) as a cofactor.

The protein resides in the cytoplasm. It carries out the reaction Endonucleolytic cleavage to 5'-phosphomonoester.. In terms of biological role, endonuclease that specifically degrades the RNA of RNA-DNA hybrids. The chain is Ribonuclease HII from Streptococcus pneumoniae serotype 2 (strain D39 / NCTC 7466).